Here is a 398-residue protein sequence, read N- to C-terminus: MELLIKNARIIDAIQDFKGDIYIKDGVINEIAQEIKKDNVEVLNCEEKILMPAFIDTHAHFRDPGLTCKEDLESGSKAALRGGYTGVCLMANTKPICSSKEVVQYVRDKSKELDLIDIHQCISVTQNFDGKTLDHLNEFKDDNEVKAISDDGVGVSNSNIMLEAMKIAKENNWVLMSHAESPEFSKSDMRIAENMMTIRDVELAKLSGAHVHMCHVSTKEALKCIIAAKDEGANITLEVTPHHIGLTKEINDYRVNPPIREKEDVEEIIKAIKMGNVDTIGTDHAPHTLEEKSKGSPGMVGLETAFPICYTKLVRENGVSLNELSKLMSLNPARLLGMNKGRISIGVEADLVLIDIDKKIKVDSNEFVSKGRNTPFEGMEYYGEVLATIKSGKIKYKK.

The Zn(2+) site is built by histidine 58 and histidine 60. Substrate-binding positions include 60-62 (HFR) and asparagine 92. Zn(2+)-binding residues include aspartate 151, histidine 178, and histidine 215. Asparagine 256 serves as a coordination point for substrate. A Zn(2+)-binding site is contributed by aspartate 283. The active site involves aspartate 283. Substrate-binding positions include histidine 287 and 297-298 (PG).

The protein belongs to the metallo-dependent hydrolases superfamily. DHOase family. Class I DHOase subfamily. The cofactor is Zn(2+).

It carries out the reaction (S)-dihydroorotate + H2O = N-carbamoyl-L-aspartate + H(+). The protein operates within pyrimidine metabolism; UMP biosynthesis via de novo pathway; (S)-dihydroorotate from bicarbonate: step 3/3. Catalyzes the reversible cyclization of carbamoyl aspartate to dihydroorotate. In Clostridium botulinum (strain Eklund 17B / Type B), this protein is Dihydroorotase.